Consider the following 162-residue polypeptide: Ribonuclease H (162 aa).

One can recognise an RNase H type-1 domain in the interval 6-154 (DMKRVEIFTD…ADRLANQGVE (149 aa)). Mg(2+) is bound by residues Asp15, Glu53, Asp82, and Asp146.

This sequence belongs to the RNase H family. In terms of assembly, monomer. It depends on Mg(2+) as a cofactor.

It localises to the cytoplasm. It catalyses the reaction Endonucleolytic cleavage to 5'-phosphomonoester.. Its function is as follows. Endonuclease that specifically degrades the RNA of RNA-DNA hybrids. The chain is Ribonuclease H from Nitrosomonas eutropha (strain DSM 101675 / C91 / Nm57).